Reading from the N-terminus, the 196-residue chain is ATP-dependent Clp protease proteolytic subunit (196 aa).

Ser99 (nucleophile) is an active-site residue. His124 is a catalytic residue.

Belongs to the peptidase S14 family. In terms of assembly, fourteen ClpP subunits assemble into 2 heptameric rings which stack back to back to give a disk-like structure with a central cavity, resembling the structure of eukaryotic proteasomes.

It is found in the cytoplasm. The enzyme catalyses Hydrolysis of proteins to small peptides in the presence of ATP and magnesium. alpha-casein is the usual test substrate. In the absence of ATP, only oligopeptides shorter than five residues are hydrolyzed (such as succinyl-Leu-Tyr-|-NHMec, and Leu-Tyr-Leu-|-Tyr-Trp, in which cleavage of the -Tyr-|-Leu- and -Tyr-|-Trp bonds also occurs).. Cleaves peptides in various proteins in a process that requires ATP hydrolysis. Has a chymotrypsin-like activity. Plays a major role in the degradation of misfolded proteins. The polypeptide is ATP-dependent Clp protease proteolytic subunit (Helicobacter hepaticus (strain ATCC 51449 / 3B1)).